The primary structure comprises 485 residues: Proline--tRNA ligase (485 aa).

This sequence belongs to the class-II aminoacyl-tRNA synthetase family. ProS type 3 subfamily. As to quaternary structure, homodimer.

The protein localises to the cytoplasm. It carries out the reaction tRNA(Pro) + L-proline + ATP = L-prolyl-tRNA(Pro) + AMP + diphosphate. Functionally, catalyzes the attachment of proline to tRNA(Pro) in a two-step reaction: proline is first activated by ATP to form Pro-AMP and then transferred to the acceptor end of tRNA(Pro). The chain is Proline--tRNA ligase from Aeropyrum pernix (strain ATCC 700893 / DSM 11879 / JCM 9820 / NBRC 100138 / K1).